A 250-amino-acid chain; its full sequence is 5-oxoprolinase subunit A (250 aa).

Belongs to the LamB/PxpA family. As to quaternary structure, forms a complex composed of PxpA, PxpB and PxpC.

The enzyme catalyses 5-oxo-L-proline + ATP + 2 H2O = L-glutamate + ADP + phosphate + H(+). In terms of biological role, catalyzes the cleavage of 5-oxoproline to form L-glutamate coupled to the hydrolysis of ATP to ADP and inorganic phosphate. The protein is 5-oxoprolinase subunit A of Paraburkholderia phytofirmans (strain DSM 17436 / LMG 22146 / PsJN) (Burkholderia phytofirmans).